We begin with the raw amino-acid sequence, 514 residues long: Glutamyl-tRNA(Gln) amidotransferase subunit A (514 aa).

Active-site charge relay system residues include lysine 76 and serine 151. The Acyl-ester intermediate role is filled by serine 175.

This sequence belongs to the amidase family. GatA subfamily. As to quaternary structure, heterotrimer of A, B and C subunits.

The catalysed reaction is L-glutamyl-tRNA(Gln) + L-glutamine + ATP + H2O = L-glutaminyl-tRNA(Gln) + L-glutamate + ADP + phosphate + H(+). Functionally, allows the formation of correctly charged Gln-tRNA(Gln) through the transamidation of misacylated Glu-tRNA(Gln) in organisms which lack glutaminyl-tRNA synthetase. The reaction takes place in the presence of glutamine and ATP through an activated gamma-phospho-Glu-tRNA(Gln). In Salinibacter ruber (strain DSM 13855 / M31), this protein is Glutamyl-tRNA(Gln) amidotransferase subunit A.